Consider the following 642-residue polypeptide: Threonine--tRNA ligase (642 aa).

In terms of domain architecture, TGS spans 1–61 (MPVITLPDGS…DADATVAIIT (61 aa)). Positions 243–534 (DHRKIGKQLD…LTEEFAGFFP (292 aa)) are catalytic. Zn(2+)-binding residues include Cys-334, His-385, and His-511.

It belongs to the class-II aminoacyl-tRNA synthetase family. Homodimer. The cofactor is Zn(2+).

The protein localises to the cytoplasm. It catalyses the reaction tRNA(Thr) + L-threonine + ATP = L-threonyl-tRNA(Thr) + AMP + diphosphate + H(+). Its function is as follows. Catalyzes the attachment of threonine to tRNA(Thr) in a two-step reaction: L-threonine is first activated by ATP to form Thr-AMP and then transferred to the acceptor end of tRNA(Thr). Also edits incorrectly charged L-seryl-tRNA(Thr). The protein is Threonine--tRNA ligase of Edwardsiella ictaluri (strain 93-146).